The chain runs to 161 residues: Nascent polypeptide-associated complex subunit beta (161 aa).

Disordered stretches follow at residues 14-41 and 125-161; these read LSANNKVGGTRRKLAKKSGTASANKDDS and QNAQAAAPATEGHEAGEKKDNDIPELIEGQSFDADVE. An NAC-A/B domain is found at 37–102; that stretch reads NKDDSKLQAQ…PQEKSLQDLF (66 aa). Residues 125–134 are compositionally biased toward low complexity; the sequence is QNAQAAAPAT. Over residues 135–146 the composition is skewed to basic and acidic residues; sequence EGHEAGEKKDND.

Belongs to the NAC-beta family. Part of the nascent polypeptide-associated complex (NAC), consisting of EGD2 and EGD1. NAC associates with ribosomes via EGD1.

Its subcellular location is the cytoplasm. It is found in the nucleus. Component of the nascent polypeptide-associated complex (NAC), a dynamic component of the ribosomal exit tunnel, protecting the emerging polypeptides from interaction with other cytoplasmic proteins to ensure appropriate nascent protein targeting. The NAC complex also promotes mitochondrial protein import by enhancing productive ribosome interactions with the outer mitochondrial membrane and blocks the inappropriate interaction of ribosomes translating non-secretory nascent polypeptides with translocation sites in the membrane of the endoplasmic reticulum. EGD1 may act as a transcription factor that exert a negative effect on the expression of several genes that are transcribed by RNA polymerase II. This Eremothecium gossypii (strain ATCC 10895 / CBS 109.51 / FGSC 9923 / NRRL Y-1056) (Yeast) protein is Nascent polypeptide-associated complex subunit beta (EGD1).